A 555-amino-acid chain; its full sequence is GPI-anchor transamidase component PIGS (555 aa).

Over 2 to 18 (ATAGAAATDLEVVRGKR) the chain is Cytoplasmic. The a cardiolipin site is built by Arg15 and Arg18. The helical transmembrane segment at 19–39 (AALFFAAVAILLGLPLWWKTT) threads the bilayer. Residues 40–517 (ETYRAPLPYS…LHLLYFPDDQ (478 aa)) are Lumenal-facing. N-linked (GlcNAc...) asparagine glycans are attached at residues Asn267 and Asn370. A helical transmembrane segment spans residues 518–532 (KFAIYIPLFLPMAVP). Topologically, residues 533–555 (ILLSLVKIFLETHKSWKKPEKID) are cytoplasmic.

The protein belongs to the PIGS family. As to quaternary structure, heteropentamer. Part of the GPI-anchor transamidase complex, consisting of PIGK, PIGT, PIGS, PIGU and GAA1.

The protein localises to the endoplasmic reticulum membrane. Its pathway is glycolipid biosynthesis; glycosylphosphatidylinositol-anchor biosynthesis. Component of the glycosylphosphatidylinositol-anchor (GPI-anchor) transamidase (GPI-T) complex that catalyzes the formation of the linkage between a proprotein and a GPI-anchor and participates in GPI anchored protein biosynthesis. This is GPI-anchor transamidase component PIGS from Rattus norvegicus (Rat).